A 128-amino-acid chain; its full sequence is MQKLLLALIVGLGGFLGASLRYLISIFAAKNFGGNFPYGTLIANILGALLIGFIMEFSMDSALISSNMKLFLTTGIMGGLTTFSTFSYETISMLTNGNITLGIENIILNLGCSLLFVVIGQKLARILF.

4 helical membrane-spanning segments follow: residues 4–24, 39–59, 71–91, and 99–119; these read LLLA…RYLI, GTLI…EFSM, FLTT…YETI, and ITLG…FVVI. G78 and T81 together coordinate Na(+).

It belongs to the fluoride channel Fluc/FEX (TC 1.A.43) family.

Its subcellular location is the cell membrane. It carries out the reaction fluoride(in) = fluoride(out). Its activity is regulated as follows. Na(+) is not transported, but it plays an essential structural role and its presence is essential for fluoride channel function. Its function is as follows. Fluoride-specific ion channel. Important for reducing fluoride concentration in the cell, thus reducing its toxicity. The sequence is that of Fluoride-specific ion channel FluC from Clostridium perfringens (strain ATCC 13124 / DSM 756 / JCM 1290 / NCIMB 6125 / NCTC 8237 / Type A).